The following is a 204-amino-acid chain: Imidazole glycerol phosphate synthase subunit HisH (204 aa).

Residues lysine 5 to leucine 204 form the Glutamine amidotransferase type-1 domain. Residue cysteine 80 is the Nucleophile of the active site. Catalysis depends on residues histidine 186 and glutamate 188.

As to quaternary structure, heterodimer of HisH and HisF.

Its subcellular location is the cytoplasm. It catalyses the reaction 5-[(5-phospho-1-deoxy-D-ribulos-1-ylimino)methylamino]-1-(5-phospho-beta-D-ribosyl)imidazole-4-carboxamide + L-glutamine = D-erythro-1-(imidazol-4-yl)glycerol 3-phosphate + 5-amino-1-(5-phospho-beta-D-ribosyl)imidazole-4-carboxamide + L-glutamate + H(+). The catalysed reaction is L-glutamine + H2O = L-glutamate + NH4(+). It functions in the pathway amino-acid biosynthesis; L-histidine biosynthesis; L-histidine from 5-phospho-alpha-D-ribose 1-diphosphate: step 5/9. Its function is as follows. IGPS catalyzes the conversion of PRFAR and glutamine to IGP, AICAR and glutamate. The HisH subunit catalyzes the hydrolysis of glutamine to glutamate and ammonia as part of the synthesis of IGP and AICAR. The resulting ammonia molecule is channeled to the active site of HisF. The sequence is that of Imidazole glycerol phosphate synthase subunit HisH from Vibrio parahaemolyticus serotype O3:K6 (strain RIMD 2210633).